The sequence spans 525 residues: Sensory neuron membrane protein 1 (525 aa).

At 1 to 11 (MLLPKELKYAA) the chain is on the cytoplasmic side. Residues 12-32 (IAGGVAVFGLIFGWVLFPVIL) traverse the membrane as a helical segment. Over 33 to 456 (KGQLKKEMAL…LKHQLFIPKR (424 aa)) the chain is Extracellular. Asn67, Asn229, and Asn324 each carry an N-linked (GlcNAc...) asparagine glycan. 3 disulfides stabilise this stretch: Cys268/Cys333, Cys297/Cys352, and Cys335/Cys341. Residue Asn440 is glycosylated (N-linked (GlcNAc...) asparagine). The helical transmembrane segment at 457 to 477 (VVGVLRWWMVSFGSLGADIGI) threads the bilayer. Residues 478 to 525 (VYHFRDHIMRLAVSGDTKVSKVTPEEDPEQKDISVIGPPAQEPAKINI) are Cytoplasmic-facing. The disordered stretch occupies residues 497 to 525 (SKVTPEEDPEQKDISVIGPPAQEPAKINI).

This sequence belongs to the CD36 family.

It is found in the cell membrane. Plays an olfactory role that is not restricted to pheromone sensitivity. This is Sensory neuron membrane protein 1 from Mamestra brassicae (Cabbage moth).